The following is a 351-amino-acid chain: Thiamine-phosphate synthase (351 aa).

The tract at residues 1–129 (MVEPYSQQKQ…GQACKQMRYR (129 aa)) is unknown. The tract at residues 130–351 (VYSLETNLMG…SQLNRIKPES (222 aa)) is thiamine-phosphate synthase. Residues 177 to 181 (QYRDK) and Asn-209 contribute to the 4-amino-2-methyl-5-(diphosphooxymethyl)pyrimidine site. Mg(2+) contacts are provided by Asp-210 and Asp-229. Position 248 (Ser-248) interacts with 4-amino-2-methyl-5-(diphosphooxymethyl)pyrimidine. 274 to 276 (TPT) is a 2-[(2R,5Z)-2-carboxy-4-methylthiazol-5(2H)-ylidene]ethyl phosphate binding site. Position 277 (Lys-277) interacts with 4-amino-2-methyl-5-(diphosphooxymethyl)pyrimidine. Gly-304 provides a ligand contact to 2-[(2R,5Z)-2-carboxy-4-methylthiazol-5(2H)-ylidene]ethyl phosphate.

The protein belongs to the thiamine-phosphate synthase family. It depends on Mg(2+) as a cofactor.

It carries out the reaction 2-[(2R,5Z)-2-carboxy-4-methylthiazol-5(2H)-ylidene]ethyl phosphate + 4-amino-2-methyl-5-(diphosphooxymethyl)pyrimidine + 2 H(+) = thiamine phosphate + CO2 + diphosphate. It catalyses the reaction 2-(2-carboxy-4-methylthiazol-5-yl)ethyl phosphate + 4-amino-2-methyl-5-(diphosphooxymethyl)pyrimidine + 2 H(+) = thiamine phosphate + CO2 + diphosphate. The catalysed reaction is 4-methyl-5-(2-phosphooxyethyl)-thiazole + 4-amino-2-methyl-5-(diphosphooxymethyl)pyrimidine + H(+) = thiamine phosphate + diphosphate. It functions in the pathway cofactor biosynthesis; thiamine diphosphate biosynthesis; thiamine phosphate from 4-amino-2-methyl-5-diphosphomethylpyrimidine and 4-methyl-5-(2-phosphoethyl)-thiazole: step 1/1. Condenses 4-methyl-5-(beta-hydroxyethyl)thiazole monophosphate (THZ-P) and 2-methyl-4-amino-5-hydroxymethyl pyrimidine pyrophosphate (HMP-PP) to form thiamine monophosphate (TMP). This Nostoc sp. (strain PCC 7120 / SAG 25.82 / UTEX 2576) protein is Thiamine-phosphate synthase.